The chain runs to 260 residues: Tryptophan 2,3-dioxygenase (260 aa).

Substrate-binding positions include 34–38 (FIVIH) and Arg-100. Residue His-219 participates in heme binding. Thr-233 serves as a coordination point for substrate.

It belongs to the tryptophan 2,3-dioxygenase family. Homotetramer. Heme is required as a cofactor.

The catalysed reaction is L-tryptophan + O2 = N-formyl-L-kynurenine. The protein operates within amino-acid degradation; L-tryptophan degradation via kynurenine pathway; L-kynurenine from L-tryptophan: step 1/2. Heme-dependent dioxygenase that catalyzes the oxidative cleavage of the L-tryptophan (L-Trp) pyrrole ring and converts L-tryptophan to N-formyl-L-kynurenine. Catalyzes the oxidative cleavage of the indole moiety. The polypeptide is Tryptophan 2,3-dioxygenase (Herpetosiphon aurantiacus (strain ATCC 23779 / DSM 785 / 114-95)).